Here is a 124-residue protein sequence, read N- to C-terminus: Large ribosomal subunit protein bL12 (124 aa).

Belongs to the bacterial ribosomal protein bL12 family. As to quaternary structure, homodimer. Part of the ribosomal stalk of the 50S ribosomal subunit. Forms a multimeric L10(L12)X complex, where L10 forms an elongated spine to which 2 to 4 L12 dimers bind in a sequential fashion. Binds GTP-bound translation factors.

In terms of biological role, forms part of the ribosomal stalk which helps the ribosome interact with GTP-bound translation factors. Is thus essential for accurate translation. In Ralstonia nicotianae (strain ATCC BAA-1114 / GMI1000) (Ralstonia solanacearum), this protein is Large ribosomal subunit protein bL12.